The primary structure comprises 155 residues: MNPLSVGNQAPAFTLLNQQEKFVSLSDFRGKKVLIYFYPKALTPGCTTQACGLRDSKSELDVLGLVVLGISPDAPKKLAQFIEKKELNFTLLSDPDHQVAEQFGVWGEKKFMGRTYDGIHRISFLINESGTIMQVFDKFKIKDHHQMIIDYLRSL.

Residues L4–L155 form the Thioredoxin domain. Catalysis depends on C46, which acts as the Cysteine sulfenic acid (-SOH) intermediate. C46 and C51 are oxidised to a cystine.

It belongs to the peroxiredoxin family. BCP/PrxQ subfamily. As to quaternary structure, monomer.

It carries out the reaction a hydroperoxide + [thioredoxin]-dithiol = an alcohol + [thioredoxin]-disulfide + H2O. Thiol-specific peroxidase that catalyzes the reduction of hydrogen peroxide and organic hydroperoxides to water and alcohols, respectively. Plays a role in cell protection against oxidative stress by detoxifying peroxides and as sensor of hydrogen peroxide-mediated signaling events. In Haemophilus influenzae (strain ATCC 51907 / DSM 11121 / KW20 / Rd), this protein is Putative peroxiredoxin bcp (bcp).